The primary structure comprises 205 residues: High frequency lysogenization protein HflD homolog (205 aa).

This sequence belongs to the HflD family.

It localises to the cytoplasm. The protein localises to the cell inner membrane. The polypeptide is High frequency lysogenization protein HflD homolog (Shewanella sp. (strain MR-4)).